The following is a 34-amino-acid chain: Omega/M-ectatotoxin-Et1a subunit B (34 aa).

Cys10 and Cys32 are joined by a disulfide.

The protein belongs to the ectatomin family. Ectatomin-Et subfamily. In terms of assembly, heterodimer of an A and a B chain; disulfide-linked. As to expression, expressed by the venom gland.

It is found in the secreted. It localises to the target cell membrane. Functionally, algogenic for animals, human and insects. At high concentrations (0.5-1 uM), it acts as a pore-forming protein that forms nonselective cation channels both in cell and artificial membranes. It is weakly selective for cation over anions channel conductance is identical in both directions. At lower concentrations (1-10 nM), this heterodimer inhibits cardiac L-type calcium currents in isolated rat cardiac ventricular myocytes. This Ectatomma tuberculatum (Selva ant) protein is Omega/M-ectatotoxin-Et1a subunit B.